The chain runs to 390 residues: tRNA(Met) cytidine acetate ligase (390 aa).

Residues Val7–His20, Gly101, Asn162, and Arg187 contribute to the ATP site.

This sequence belongs to the TmcAL family.

It localises to the cytoplasm. The catalysed reaction is cytidine(34) in elongator tRNA(Met) + acetate + ATP = N(4)-acetylcytidine(34) in elongator tRNA(Met) + AMP + diphosphate. Its function is as follows. Catalyzes the formation of N(4)-acetylcytidine (ac(4)C) at the wobble position of elongator tRNA(Met), using acetate and ATP as substrates. First activates an acetate ion to form acetyladenylate (Ac-AMP) and then transfers the acetyl group to tRNA to form ac(4)C34. This chain is tRNA(Met) cytidine acetate ligase, found in Listeria monocytogenes serotype 4b (strain CLIP80459).